A 433-amino-acid polypeptide reads, in one-letter code: MGQELCAKRLQPGCSCYHRSEGGEAHSCQRSQPGSTEPAVFELTEASSSTASFHPRGLEAASAQKLKSKRPRSNSDSFQEENLRQGLPWKKSLPFGAASSYLNLEKLGEGSYAKVYKGISRINGQLVALKVISMNAEEGVPFTAIREASLLKGLKHANIVLLHDIVHTKETLTFVFEYMHTDLAQYMSQHPGGLHPHNVRLFMFQLLRGLAYIHHQRVLHRDLKPQNLLLSHLGELKLADFGLARAKSIPSQTYSSEVVTLWYRPPDALLGATEYSSELDIWGAGCIFIEMFQGQPLFPGVSNILEQLEKIWEVLGVPTEDTWPGVSKLPNYNPEWFPPPKPQSLQIVWDRLGGVPEAEDLASQMLKGFPRDRVSAQEALVHDYFSVLPSQLYQLPDEESLFAVSGVKLKPEMCDLSASYRKRHHLVGVNKCW.

Residues 46-83 (ASSSTASFHPRGLEAASAQKLKSKRPRSNSDSFQEENL) are disordered. The Protein kinase domain occupies 52–336 (SFHPRGLEAA…SKLPNYNPEW (285 aa)). Residues 58–66 (LEAASAQKL) and Glu-81 each bind ATP. The active-site Proton acceptor is Thr-173.

The protein belongs to the protein kinase superfamily. CMGC Ser/Thr protein kinase family. CDC2/CDKX subfamily. It depends on Mg(2+) as a cofactor.

The catalysed reaction is L-seryl-[protein] + ATP = O-phospho-L-seryl-[protein] + ADP + H(+). It carries out the reaction L-threonyl-[protein] + ATP = O-phospho-L-threonyl-[protein] + ADP + H(+). In terms of biological role, serine/threonine-protein kinase that acts like an antiapoptotic protein that counters TRAIL/TNFSF10-induced apoptosis by inducing phosphorylation of BIRC5 at 'Thr-34'. This chain is Cyclin-dependent kinase 15 (Cdk15), found in Mus musculus (Mouse).